The chain runs to 326 residues: Beta-ketoacyl-[acyl-carrier-protein] synthase III (326 aa).

Active-site residues include Cys-112 and His-251. Residues 252 to 256 (QANSR) are ACP-binding. Asn-281 is an active-site residue.

Belongs to the thiolase-like superfamily. FabH family. Homodimer.

The protein localises to the cytoplasm. The enzyme catalyses malonyl-[ACP] + acetyl-CoA + H(+) = 3-oxobutanoyl-[ACP] + CO2 + CoA. It participates in lipid metabolism; fatty acid biosynthesis. In terms of biological role, catalyzes the condensation reaction of fatty acid synthesis by the addition to an acyl acceptor of two carbons from malonyl-ACP. Catalyzes the first condensation reaction which initiates fatty acid synthesis and may therefore play a role in governing the total rate of fatty acid production. Possesses both acetoacetyl-ACP synthase and acetyl transacylase activities. Its substrate specificity determines the biosynthesis of branched-chain and/or straight-chain of fatty acids. The sequence is that of Beta-ketoacyl-[acyl-carrier-protein] synthase III from Clostridium botulinum (strain Langeland / NCTC 10281 / Type F).